The chain runs to 167 residues: NAD(P)H-quinone oxidoreductase subunit I, chloroplastic (167 aa).

4Fe-4S ferredoxin-type domains lie at 55-84 (GRIH…VDWK) and 95-124 (LNYS…MTEE). Cys64, Cys67, Cys70, Cys74, Cys104, Cys107, Cys110, and Cys114 together coordinate [4Fe-4S] cluster.

This sequence belongs to the complex I 23 kDa subunit family. As to quaternary structure, NDH is composed of at least 16 different subunits, 5 of which are encoded in the nucleus. [4Fe-4S] cluster serves as cofactor.

It localises to the plastid. The protein resides in the chloroplast thylakoid membrane. It catalyses the reaction a plastoquinone + NADH + (n+1) H(+)(in) = a plastoquinol + NAD(+) + n H(+)(out). It carries out the reaction a plastoquinone + NADPH + (n+1) H(+)(in) = a plastoquinol + NADP(+) + n H(+)(out). Its function is as follows. NDH shuttles electrons from NAD(P)H:plastoquinone, via FMN and iron-sulfur (Fe-S) centers, to quinones in the photosynthetic chain and possibly in a chloroplast respiratory chain. The immediate electron acceptor for the enzyme in this species is believed to be plastoquinone. Couples the redox reaction to proton translocation, and thus conserves the redox energy in a proton gradient. The protein is NAD(P)H-quinone oxidoreductase subunit I, chloroplastic of Pelargonium hortorum (Common geranium).